We begin with the raw amino-acid sequence, 220 residues long: Ribonuclease HII (220 aa).

Positions 32 to 220 (KHIAGIDEAG…FAPIKGRFDC (189 aa)) constitute an RNase H type-2 domain. 3 residues coordinate a divalent metal cation: Asp-38, Glu-39, and Asp-130.

The protein belongs to the RNase HII family. Mn(2+) serves as cofactor. The cofactor is Mg(2+).

It is found in the cytoplasm. It carries out the reaction Endonucleolytic cleavage to 5'-phosphomonoester.. Functionally, endonuclease that specifically degrades the RNA of RNA-DNA hybrids. The sequence is that of Ribonuclease HII from Brucella suis (strain ATCC 23445 / NCTC 10510).